We begin with the raw amino-acid sequence, 856 residues long: TPR repeat-containing protein TP_0123 (856 aa).

3 TPR repeats span residues 107 to 140 (YAAV…VADD), 523 to 556 (YRTF…AEQL), and 603 to 636 (TVSL…ALQY).

The chain is TPR repeat-containing protein TP_0123 from Treponema pallidum (strain Nichols).